Here is a 104-residue protein sequence, read N- to C-terminus: Large ribosomal subunit protein bL21c (104 aa).

Belongs to the bacterial ribosomal protein bL21 family. In terms of assembly, part of the 50S ribosomal subunit.

Its subcellular location is the plastid. It localises to the chloroplast. In terms of biological role, this protein binds to 23S rRNA. The protein is Large ribosomal subunit protein bL21c of Porphyra purpurea (Red seaweed).